Consider the following 296-residue polypeptide: Protoheme IX farnesyltransferase (296 aa).

9 helical membrane passes run 29 to 49 (LSGL…GHVA), 54 to 74 (ALTV…NCWM), 98 to 118 (FTAL…LALV), 121 to 141 (PLTA…YTPM), 147 to 167 (LALL…WTAA), 175 to 195 (GLAL…AVSI), 221 to 241 (WIAA…PLRV), 246 to 266 (YGAV…AGVG), and 275 to 295 (NFFL…FLGA).

Belongs to the UbiA prenyltransferase family. Protoheme IX farnesyltransferase subfamily.

It localises to the cell inner membrane. It carries out the reaction heme b + (2E,6E)-farnesyl diphosphate + H2O = Fe(II)-heme o + diphosphate. It participates in porphyrin-containing compound metabolism; heme O biosynthesis; heme O from protoheme: step 1/1. Converts heme B (protoheme IX) to heme O by substitution of the vinyl group on carbon 2 of heme B porphyrin ring with a hydroxyethyl farnesyl side group. This is Protoheme IX farnesyltransferase from Anaeromyxobacter sp. (strain Fw109-5).